The chain runs to 159 residues: NADH-quinone oxidoreductase subunit I (159 aa).

2 consecutive 4Fe-4S ferredoxin-type domains span residues 51-80 (RRYENGEERCIACKLCEAICPAQAIVIEAD) and 90-119 (TRYDIDMTKCIYCGLCQEACPVDAIVEGPN). Residues C60, C63, C66, C70, C99, C102, C105, and C109 each coordinate [4Fe-4S] cluster.

It belongs to the complex I 23 kDa subunit family. NDH-1 is composed of 14 different subunits. Subunits NuoA, H, J, K, L, M, N constitute the membrane sector of the complex. [4Fe-4S] cluster is required as a cofactor.

It localises to the cell membrane. It carries out the reaction a quinone + NADH + 5 H(+)(in) = a quinol + NAD(+) + 4 H(+)(out). NDH-1 shuttles electrons from NADH, via FMN and iron-sulfur (Fe-S) centers, to quinones in the respiratory chain. The immediate electron acceptor for the enzyme in this species is believed to be ubiquinone. Couples the redox reaction to proton translocation (for every two electrons transferred, four hydrogen ions are translocated across the cytoplasmic membrane), and thus conserves the redox energy in a proton gradient. The polypeptide is NADH-quinone oxidoreductase subunit I (Rickettsia africae (strain ESF-5)).